A 226-amino-acid polypeptide reads, in one-letter code: UPF0758 protein SPT_1135 (226 aa).

In terms of domain architecture, MPN spans serine 103–leucine 225. Zn(2+) contacts are provided by histidine 174, histidine 176, and aspartate 187. Positions histidine 174 to aspartate 187 match the JAMM motif motif.

This sequence belongs to the UPF0758 family.

The polypeptide is UPF0758 protein SPT_1135 (Streptococcus pneumoniae (strain Taiwan19F-14)).